The primary structure comprises 359 residues: 5-amino-6-(D-ribitylamino)uracil--L-tyrosine 4-hydroxyphenyl transferase (359 aa).

The region spanning 45-282 (VTYVVNANIN…TYAVSRIFFK (238 aa)) is the Radical SAM core domain. Cys-59, Cys-63, and Cys-66 together coordinate [4Fe-4S] cluster.

Belongs to the radical SAM superfamily. CofH family. In terms of assembly, consists of two subunits, CofG and CofH. The cofactor is [4Fe-4S] cluster.

It carries out the reaction 5-amino-6-(D-ribitylamino)uracil + L-tyrosine + S-adenosyl-L-methionine = 5-amino-5-(4-hydroxybenzyl)-6-(D-ribitylimino)-5,6-dihydrouracil + 2-iminoacetate + 5'-deoxyadenosine + L-methionine + H(+). Its pathway is cofactor biosynthesis; coenzyme F0 biosynthesis. Its function is as follows. Catalyzes the radical-mediated synthesis of 5-amino-5-(4-hydroxybenzyl)-6-(D-ribitylimino)-5,6-dihydrouracil from 5-amino-6-(D-ribitylamino)uracil and L-tyrosine. This chain is 5-amino-6-(D-ribitylamino)uracil--L-tyrosine 4-hydroxyphenyl transferase, found in Methanococcus maripaludis (strain C6 / ATCC BAA-1332).